The sequence spans 319 residues: RNA polymerase II holoenzyme cyclin-like subunit (319 aa).

One can recognise a Cyclin N-terminal domain in the interval 53–142 (QQLIRLAKRL…LGECEFFMIS (90 aa)). Residues 237-251 (QGQQAQGGMPEPAAA) show a composition bias toward low complexity. The disordered stretch occupies residues 237–261 (QGQQAQGGMPEPAAAEPKEKRQQDR). Positions 252-261 (EPKEKRQQDR) are enriched in basic and acidic residues.

The protein belongs to the cyclin family. Cyclin C subfamily. As to quaternary structure, component of the SRB8-11 complex, a regulatory module of the Mediator complex. Interacts with SSN3/FCK1.

The protein resides in the nucleus. Functionally, component of the SRB8-11 complex. The SRB8-11 complex is a regulatory module of the Mediator complex which is itself involved in regulation of basal and activated RNA polymerase II-dependent transcription. The SRB8-11 complex may be involved in the transcriptional repression of a subset of genes regulated by Mediator. It may inhibit the association of the Mediator complex with RNA polymerase II to form the holoenzyme complex. The SRB8-11 complex phosphorylates the C-terminal domain (CTD) of the largest subunit of RNA polymerase II. May play a role in signal transduction pathways regulating secondary metabolism and fungal development (conidiation). This chain is RNA polymerase II holoenzyme cyclin-like subunit (SSN8), found in Gibberella moniliformis (Maize ear and stalk rot fungus).